Consider the following 153-residue polypeptide: Myosin regulatory light chain LC-2, mantle muscle (153 aa).

At Ala-1 the chain carries Blocked amino end (Ala). 2 consecutive EF-hand domains span residues 13–48 and 82–117; these read RQMQELKEAFTMIDQDRDGFIGMEDLKDMFSSLGRV and DPEDALRNAFSMFDEDGQGFIPEDYLKDLLENMGDN. Asp-26, Asp-28, Asp-30, and Asp-37 together coordinate Ca(2+).

Its function is as follows. In molluscan muscle, calcium regulation is associated with myosin rather than with actin. Muscle myosin contains two types of light chains: the catalytic light chain, essential for ATPase activity, and the regulatory light chain, a calcium-binding protein responsible for Ca(2+) dependent binding and Ca(2+) dependent Mg-ATPase activity. In Todarodes pacificus (Japanese flying squid), this protein is Myosin regulatory light chain LC-2, mantle muscle.